The chain runs to 156 residues: Small ribosomal subunit protein uS7 (156 aa).

Belongs to the universal ribosomal protein uS7 family. As to quaternary structure, part of the 30S ribosomal subunit. Contacts proteins S9 and S11.

One of the primary rRNA binding proteins, it binds directly to 16S rRNA where it nucleates assembly of the head domain of the 30S subunit. Is located at the subunit interface close to the decoding center, probably blocks exit of the E-site tRNA. This is Small ribosomal subunit protein uS7 from Micrococcus luteus (strain ATCC 4698 / DSM 20030 / JCM 1464 / CCM 169 / CCUG 5858 / IAM 1056 / NBRC 3333 / NCIMB 9278 / NCTC 2665 / VKM Ac-2230) (Micrococcus lysodeikticus).